The chain runs to 359 residues: Ni-sirohydrochlorin a,c-diamide reductive cyclase complex, component CfbD (359 aa).

It belongs to the NifD/NifK/NifE/NifN family. In terms of assembly, homodimer or monomer. The Ni-sirohydrochlorin a,c-diamide reductive cyclase complex is composed of a NifH homolog component CfbC and a NifD homolog component CfbD. Requires [4Fe-4S] cluster as cofactor.

It catalyses the reaction Ni-sirohydrochlorin a,c-diamide + 3 AH2 + ATP + H2O = 15,17(3)-seco-F430-17(3)-acid + 3 A + ADP + phosphate. Functionally, involved in the biosynthesis of the unique nickel-containing tetrapyrrole coenzyme F430, the prosthetic group of methyl-coenzyme M reductase (MCR), which plays a key role in methanogenesis and anaerobic methane oxidation. Catalyzes both the six-electron reduction of the tetrahydroporphyrin ring system and the gamma-lactamization of the c-acetamide side chain of Ni-sirohydrochlorin a,c-diamide to yield 15,17(3)-seco-F430-17(3)-acid (seco-F430), the last intermediate in the biosynthesis of the coenzyme F430. The sequence is that of Ni-sirohydrochlorin a,c-diamide reductive cyclase complex, component CfbD from Methanothermobacter thermautotrophicus (strain ATCC 29096 / DSM 1053 / JCM 10044 / NBRC 100330 / Delta H) (Methanobacterium thermoautotrophicum).